Consider the following 144-residue polypeptide: 3-hydroxyacyl-[acyl-carrier-protein] dehydratase FabZ (144 aa).

His-51 is a catalytic residue.

The protein belongs to the thioester dehydratase family. FabZ subfamily.

The protein localises to the cytoplasm. It catalyses the reaction a (3R)-hydroxyacyl-[ACP] = a (2E)-enoyl-[ACP] + H2O. Functionally, involved in unsaturated fatty acids biosynthesis. Catalyzes the dehydration of short chain beta-hydroxyacyl-ACPs and long chain saturated and unsaturated beta-hydroxyacyl-ACPs. The polypeptide is 3-hydroxyacyl-[acyl-carrier-protein] dehydratase FabZ (Clostridium botulinum (strain 657 / Type Ba4)).